Reading from the N-terminus, the 205-residue chain is Syndecan 4-B (205 aa).

The N-terminal stretch at 1–17 is a signal peptide; that stretch reads MNRLLLLLALVLSGVAA. The Extracellular segment spans residues 18–162; the sequence is ESIRETETMD…FFQRTEVIVA (145 aa). Residues 26 to 113 form a disordered region; that stretch reads MDPTSMLEYE…HDFDETKTGR (88 aa). S37, S73, and S75 each carry an O-linked (Xyl...) (glycosaminoglycan) serine glycan. Over residues 44–94 the composition is skewed to acidic residues; the sequence is VFVDEDDDDDYEDGVDYEIDSESDNDEDYSGSGDDDFDDEDNVEDEDEEET. Positions 102-113 are enriched in basic and acidic residues; it reads PEHDFDETKTGR. The helical transmembrane segment at 163 to 183 threads the bilayer; the sequence is IIAGTLVGLVVAVSFIVFLVI. Residues 184 to 205 are Cytoplasmic-facing; it reads RRNQNGDLVKKPIYKKTSTMEV.

This sequence belongs to the syndecan proteoglycan family. As to quaternary structure, interacts with the Wnt receptor fzd7 and its signal transducer dvl2/dsh. In terms of processing, O-glycosylated; contains both chondroitin sulfate and heparan sulfate. Ser-37, Ser-73 and Ser-75 can all be modified by either chondroitin sulfate or heparan sulfate, and the protein exists in forms that contain only chondroitin sulfate, only heparan sulfate and both chondroitin sulfate and heparan sulfate. As to expression, expressed in the animal hemisphere from the 4-cell to the blastula stage. During gastrulation, expressed in the involuting dorsal mesoderm and ectoderm. After involution, localized mainly to the anterior neuroectoderm. At later stages, expressed in the brain, branchial arches, pronephros, tailbud, and at low levels in the somites.

Its subcellular location is the membrane. In terms of biological role, cell surface proteoglycan. Regulates non-canonical Wnt signaling, being necessary and sufficient for fibronectrin-mediated translocation of dvl2/dsh to the plasma membrane. Required for proper convergent extension movements during gastrulation, which shape the neural plate, and for subsequent neural tube closure. This chain is Syndecan 4-B (sdc4-b), found in Xenopus laevis (African clawed frog).